A 384-amino-acid polypeptide reads, in one-letter code: tRNA(Met) cytidine acetate ligase (384 aa).

ATP-binding positions include Val-7–Leu-20, Gly-101, Asn-153, and Arg-178.

This sequence belongs to the TmcAL family.

Its subcellular location is the cytoplasm. It catalyses the reaction cytidine(34) in elongator tRNA(Met) + acetate + ATP = N(4)-acetylcytidine(34) in elongator tRNA(Met) + AMP + diphosphate. In terms of biological role, catalyzes the formation of N(4)-acetylcytidine (ac(4)C) at the wobble position of elongator tRNA(Met), using acetate and ATP as substrates. First activates an acetate ion to form acetyladenylate (Ac-AMP) and then transfers the acetyl group to tRNA to form ac(4)C34. The polypeptide is tRNA(Met) cytidine acetate ligase (Lactobacillus delbrueckii subsp. bulgaricus (strain ATCC BAA-365 / Lb-18)).